The primary structure comprises 75 residues: UPF0352 protein VIBHAR_03027 (75 aa).

This sequence belongs to the UPF0352 family.

The polypeptide is UPF0352 protein VIBHAR_03027 (Vibrio campbellii (strain ATCC BAA-1116)).